Reading from the N-terminus, the 1547-residue chain is Fatty acid synthase subunit alpha (1547 aa).

A disordered region spans residues threonine 94 to alanine 121. A compositionally biased stretch (polar residues) spans glutamate 109 to histidine 118. The Carrier domain maps to leucine 145–arginine 221. Serine 180 carries the O-(pantetheine 4'-phosphoryl)serine modification. The segment at glycine 563–threonine 798 is ketoreductase (KR) domain. Residues lysine 1004–histidine 1476 enclose the Ketosynthase family 3 (KS3) domain. Active-site for beta-ketoacyl synthase activity residues include cysteine 1190 and histidine 1442.

It belongs to the thiolase-like superfamily. Fungal fatty acid synthetase subunit alpha family. The cofactor is pantetheine 4'-phosphate.

The enzyme catalyses acetyl-CoA + n malonyl-CoA + 2n NADPH + 4n H(+) = a long-chain-acyl-CoA + n CoA + n CO2 + 2n NADP(+).. It catalyses the reaction a fatty acyl-[ACP] + malonyl-[ACP] + H(+) = a 3-oxoacyl-[ACP] + holo-[ACP] + CO2. It carries out the reaction a (3R)-hydroxyacyl-[ACP] + NADP(+) = a 3-oxoacyl-[ACP] + NADPH + H(+). It participates in mycotoxin biosynthesis; HC-toxin biosynthesis. In terms of biological role, fatty acid synthase alpha subunit, part of the diffuse TOX2 gene cluster that mediates the biosynthesis of the HC-toxin, cyclic tetrapeptide of structure cyclo(D-Pro-L-Ala-D-Ala-L-Aeo), where Aeo stands for 2-amino-9,10-epoxi-8-oxodecanoic acid. HC-toxin is a determinant of specificity and virulence in the interaction between the producing fungus and its host, maize. TOXH contribute to the synthesis of the decanoic backbone of 2-amino-9,10-epoxi-8-oxodecanoic acid, an essential precursor for the production of the major forms of HC-toxin by the non-ribosomal peptide synthetase HTS1. The chain is Fatty acid synthase subunit alpha from Cochliobolus carbonum (Maize leaf spot fungus).